Consider the following 234-residue polypeptide: Golgi SNAP receptor complex member 1 (234 aa).

Residues 1–212 (MSETWEALRK…MQKIKTKKQK (212 aa)) lie on the Cytoplasmic side of the membrane. Residues 54–121 (VTTEIEGLIE…RDNVDQVLQR (68 aa)) adopt a coiled-coil conformation. Residues 213–233 (NTMILAGVISACLIFTIFWII) traverse the membrane as a helical; Anchor for type IV membrane protein segment. A topological domain (vesicular) is located at residue Asn-234.

This sequence belongs to the GOSR1 family. Component of several multiprotein Golgi SNARE complexes.

Its subcellular location is the golgi apparatus membrane. Its function is as follows. Involved in transport from the ER to the Golgi apparatus as well as in intra-Golgi transport. It belongs to a super-family of proteins called t-SNAREs or soluble NSF (N-ethylmaleimide-sensitive factor) attachment protein receptor. Cooperates with ykt-6 for proper expression of Golgi-resident proteins. Required along with ykt-6 for normal embryonic development, seam cell division or differentiation, and ray formation. The protein is Golgi SNAP receptor complex member 1 of Caenorhabditis briggsae.